A 261-amino-acid polypeptide reads, in one-letter code: Glucosamine-6-phosphate deaminase (261 aa).

The active-site Proton acceptor; for enolization step is D67. N135 serves as the catalytic For ring-opening step. H137 (proton acceptor; for ring-opening step) is an active-site residue. Catalysis depends on E142, which acts as the For ring-opening step.

It belongs to the glucosamine/galactosamine-6-phosphate isomerase family. NagB subfamily. In terms of assembly, homohexamer.

It carries out the reaction alpha-D-glucosamine 6-phosphate + H2O = beta-D-fructose 6-phosphate + NH4(+). The protein operates within amino-sugar metabolism; N-acetylneuraminate degradation; D-fructose 6-phosphate from N-acetylneuraminate: step 5/5. Catalyzes the reversible isomerization-deamination of glucosamine 6-phosphate (GlcN6P) to form fructose 6-phosphate (Fru6P) and ammonium ion. This Hahella chejuensis (strain KCTC 2396) protein is Glucosamine-6-phosphate deaminase.